A 401-amino-acid chain; its full sequence is Tryptophan synthase beta chain (401 aa).

The residue at position 92 (Lys92) is an N6-(pyridoxal phosphate)lysine.

The protein belongs to the TrpB family. As to quaternary structure, tetramer of two alpha and two beta chains. Pyridoxal 5'-phosphate serves as cofactor.

The catalysed reaction is (1S,2R)-1-C-(indol-3-yl)glycerol 3-phosphate + L-serine = D-glyceraldehyde 3-phosphate + L-tryptophan + H2O. Its pathway is amino-acid biosynthesis; L-tryptophan biosynthesis; L-tryptophan from chorismate: step 5/5. Functionally, the beta subunit is responsible for the synthesis of L-tryptophan from indole and L-serine. This chain is Tryptophan synthase beta chain, found in Ruthia magnifica subsp. Calyptogena magnifica.